The following is a 445-amino-acid chain: Bifunctional protein GlmU (445 aa).

The segment at 1–218 is pyrophosphorylase; sequence MRALVLAAGK…LLEITGVNTR (218 aa). Residues 6–9, lysine 20, glutamine 69, 74–75, 96–98, glycine 134, glutamate 147, asparagine 162, and asparagine 216 each bind UDP-N-acetyl-alpha-D-glucosamine; these read LAAG, GT, and YGD. A Mg(2+)-binding site is contributed by aspartate 98. A Mg(2+)-binding site is contributed by asparagine 216. The tract at residues 219–239 is linker; the sequence is KTLVWLEEQLRMRKIEELLEN. The segment at 240-445 is N-acetyltransferase; that stretch reads GVTILDPATT…GWVLKKRKEE (206 aa). UDP-N-acetyl-alpha-D-glucosamine is bound by residues arginine 321 and lysine 339. Residue histidine 351 is the Proton acceptor of the active site. Tyrosine 354 and asparagine 365 together coordinate UDP-N-acetyl-alpha-D-glucosamine. Residues alanine 368, 374–375, serine 393, alanine 411, and arginine 428 each bind acetyl-CoA; that span reads NY.

In the N-terminal section; belongs to the N-acetylglucosamine-1-phosphate uridyltransferase family. It in the C-terminal section; belongs to the transferase hexapeptide repeat family. Homotrimer. Requires Mg(2+) as cofactor.

Its subcellular location is the cytoplasm. It catalyses the reaction alpha-D-glucosamine 1-phosphate + acetyl-CoA = N-acetyl-alpha-D-glucosamine 1-phosphate + CoA + H(+). It carries out the reaction N-acetyl-alpha-D-glucosamine 1-phosphate + UTP + H(+) = UDP-N-acetyl-alpha-D-glucosamine + diphosphate. The protein operates within nucleotide-sugar biosynthesis; UDP-N-acetyl-alpha-D-glucosamine biosynthesis; N-acetyl-alpha-D-glucosamine 1-phosphate from alpha-D-glucosamine 6-phosphate (route II): step 2/2. It functions in the pathway nucleotide-sugar biosynthesis; UDP-N-acetyl-alpha-D-glucosamine biosynthesis; UDP-N-acetyl-alpha-D-glucosamine from N-acetyl-alpha-D-glucosamine 1-phosphate: step 1/1. It participates in bacterial outer membrane biogenesis; LPS lipid A biosynthesis. Functionally, catalyzes the last two sequential reactions in the de novo biosynthetic pathway for UDP-N-acetylglucosamine (UDP-GlcNAc). The C-terminal domain catalyzes the transfer of acetyl group from acetyl coenzyme A to glucosamine-1-phosphate (GlcN-1-P) to produce N-acetylglucosamine-1-phosphate (GlcNAc-1-P), which is converted into UDP-GlcNAc by the transfer of uridine 5-monophosphate (from uridine 5-triphosphate), a reaction catalyzed by the N-terminal domain. The polypeptide is Bifunctional protein GlmU (Thermotoga maritima (strain ATCC 43589 / DSM 3109 / JCM 10099 / NBRC 100826 / MSB8)).